We begin with the raw amino-acid sequence, 562 residues long: Serine palmitoyltransferase 2 (562 aa).

The helical transmembrane segment at 61–81 threads the bilayer; it reads LITYLNYLILIILGHIHDFLG. Position 365 is an N6-(pyridoxal phosphate)lysine (lysine 365).

The protein belongs to the class-II pyridoxal-phosphate-dependent aminotransferase family. Pyridoxal 5'-phosphate is required as a cofactor.

The protein resides in the membrane. The enzyme catalyses L-serine + hexadecanoyl-CoA + H(+) = 3-oxosphinganine + CO2 + CoA. The protein operates within lipid metabolism; sphingolipid metabolism. The protein is Serine palmitoyltransferase 2 (LCB2) of Kluyveromyces lactis (strain ATCC 8585 / CBS 2359 / DSM 70799 / NBRC 1267 / NRRL Y-1140 / WM37) (Yeast).